We begin with the raw amino-acid sequence, 315 residues long: Ribosomal RNA small subunit methyltransferase H (315 aa).

Residues 32–34, aspartate 52, phenylalanine 78, aspartate 100, and glutamine 107 each bind S-adenosyl-L-methionine; that span reads GGH.

This sequence belongs to the methyltransferase superfamily. RsmH family.

The protein resides in the cytoplasm. The enzyme catalyses cytidine(1402) in 16S rRNA + S-adenosyl-L-methionine = N(4)-methylcytidine(1402) in 16S rRNA + S-adenosyl-L-homocysteine + H(+). Its function is as follows. Specifically methylates the N4 position of cytidine in position 1402 (C1402) of 16S rRNA. The chain is Ribosomal RNA small subunit methyltransferase H from Psychromonas ingrahamii (strain DSM 17664 / CCUG 51855 / 37).